A 205-amino-acid polypeptide reads, in one-letter code: GTP cyclohydrolase 1 (205 aa).

Zn(2+)-binding residues include Cys94, His97, and Cys165.

This sequence belongs to the GTP cyclohydrolase I family. In terms of assembly, toroid-shaped homodecamer, composed of two pentamers of five dimers.

The enzyme catalyses GTP + H2O = 7,8-dihydroneopterin 3'-triphosphate + formate + H(+). The protein operates within cofactor biosynthesis; 7,8-dihydroneopterin triphosphate biosynthesis; 7,8-dihydroneopterin triphosphate from GTP: step 1/1. The polypeptide is GTP cyclohydrolase 1 (Sinorhizobium medicae (strain WSM419) (Ensifer medicae)).